We begin with the raw amino-acid sequence, 317 residues long: Uridylate kinase (317 aa).

Position 9 to 12 (K9 to G12) interacts with ATP. G49 contributes to the UMP binding site. Residues G50 and R54 each contribute to the ATP site. UMP contacts are provided by residues D69 and T130–T137. ATP-binding residues include N158, Y164, and D167.

It belongs to the UMP kinase family. Homohexamer.

The protein localises to the cytoplasm. The enzyme catalyses UMP + ATP = UDP + ADP. Its pathway is pyrimidine metabolism; CTP biosynthesis via de novo pathway; UDP from UMP (UMPK route): step 1/1. With respect to regulation, inhibited by UTP. Functionally, catalyzes the reversible phosphorylation of UMP to UDP. In Malacoplasma penetrans (strain HF-2) (Mycoplasma penetrans), this protein is Uridylate kinase.